We begin with the raw amino-acid sequence, 289 residues long: tRNA dimethylallyltransferase (289 aa).

G9–T16 is an ATP binding site. A substrate-binding site is contributed by T11–T16. The tract at residues D34–C37 is interaction with substrate tRNA.

Belongs to the IPP transferase family. Monomer. Requires Mg(2+) as cofactor.

The enzyme catalyses adenosine(37) in tRNA + dimethylallyl diphosphate = N(6)-dimethylallyladenosine(37) in tRNA + diphosphate. In terms of biological role, catalyzes the transfer of a dimethylallyl group onto the adenine at position 37 in tRNAs that read codons beginning with uridine, leading to the formation of N6-(dimethylallyl)adenosine (i(6)A). The chain is tRNA dimethylallyltransferase from Campylobacter jejuni subsp. doylei (strain ATCC BAA-1458 / RM4099 / 269.97).